Reading from the N-terminus, the 255-residue chain is uncharacterized protein (255 aa).

This is an uncharacterized protein from Pseudomonas chlororaphis (Pseudomonas aureofaciens).